Reading from the N-terminus, the 147-residue chain is Hemoglobin subunit beta-1 (147 aa).

Positions 3-147 (KWSKTELTII…VVSALGKQYH (145 aa)) constitute a Globin domain. Heme b contacts are provided by His-64 and His-93.

This sequence belongs to the globin family. As to quaternary structure, hb1 is a heterotetramer of two alpha chains and two beta-1 chains. Red blood cells.

In terms of biological role, involved in oxygen transport from gills to the various peripheral tissues. The sequence is that of Hemoglobin subunit beta-1 (hbb1) from Cygnodraco mawsoni (Antarctic dragonfish).